The primary structure comprises 133 residues: Holo-[acyl-carrier-protein] synthase (133 aa).

Aspartate 8 and glutamate 56 together coordinate Mg(2+).

This sequence belongs to the P-Pant transferase superfamily. AcpS family. The cofactor is Mg(2+).

The protein localises to the cytoplasm. It carries out the reaction apo-[ACP] + CoA = holo-[ACP] + adenosine 3',5'-bisphosphate + H(+). In terms of biological role, transfers the 4'-phosphopantetheine moiety from coenzyme A to a Ser of acyl-carrier-protein. The sequence is that of Holo-[acyl-carrier-protein] synthase from Clostridium perfringens (strain SM101 / Type A).